The primary structure comprises 116 residues: Large ribosomal subunit protein bL17 (116 aa).

Belongs to the bacterial ribosomal protein bL17 family. In terms of assembly, part of the 50S ribosomal subunit. Contacts protein L32.

The polypeptide is Large ribosomal subunit protein bL17 (Helicobacter pylori (strain G27)).